A 499-amino-acid chain; its full sequence is Alpha-L-arabinofuranosidase B (499 aa).

Residues methionine 1–serine 17 form the signal peptide. Positions alanine 18 to valine 335 are catalytic. 3 cysteine pairs are disulfide-bonded: cysteine 21-cysteine 31, cysteine 81-cysteine 86, and cysteine 176-cysteine 177. Residue asparagine 83 is glycosylated (N-linked (GlcNAc...) asparagine). A glycan (N-linked (GlcNAc...) asparagine) is linked at asparagine 202. Aspartate 219 provides a ligand contact to substrate. Catalysis depends on glutamate 221, which acts as the Nucleophile. The substrate site is built by asparagine 222, asparagine 223, and glycine 296. The active-site Proton donor is aspartate 297. Residues glycine 336 to serine 499 are ABD. Cysteine 401 and cysteine 439 are joined by a disulfide. Substrate is bound by residues histidine 416, asparagine 418, phenylalanine 419, aspartate 435, histidine 463, glutamate 465, leucine 468, and aspartate 488.

The protein belongs to the glycosyl hydrolase 54 family.

The protein localises to the secreted. It carries out the reaction Hydrolysis of terminal non-reducing alpha-L-arabinofuranoside residues in alpha-L-arabinosides.. Its pathway is glycan metabolism; L-arabinan degradation. Alpha-L-arabinofuranosidase involved in the degradation of arabinoxylan, a major component of plant hemicellulose. Able to hydrolyze 1,5-, 1,3- and 1,2-alpha-linkages not only in L-arabinofuranosyl oligosaccharides, but also in polysaccharides containing terminal non-reducing L-arabinofuranoses in side chains, like L-arabinan, arabinogalactan and arabinoxylan. The sequence is that of Alpha-L-arabinofuranosidase B (abfB) from Aspergillus kawachii (strain NBRC 4308) (White koji mold).